The primary structure comprises 226 residues: Late protein I226R (226 aa).

The signal sequence occupies residues 1-16; it reads MKMETFLVCLFHNADG. Residues Asn142 and Asn164 are each glycosylated (N-linked (GlcNAc...) asparagine; by host).

It belongs to the asfivirus I226R family.

Its function is as follows. Plays a role in the inhibition of host NF-kappa-B and IRF3 signaling pathways. Mechanistically, promotes the degradation of host IKBKG through enhancing its ubiquitination leading to inhibition of both pathways. This African swine fever virus (isolate Warthog/Namibia/Wart80/1980) (ASFV) protein is Late protein I226R.